A 697-amino-acid polypeptide reads, in one-letter code: MENSVKMDNSGNSTPLPQRQRRANNQPNKNIGKLGPQKQNEGASDGGPAEKRQRFGPNNQNGGGGSVVGGGGGGGGGGGQNQNKNFANKGGFGGGGNRNRNRGGNQNRSNFQNQNQNQKSTTDAPKADGGNLNDKSNEANNANQSNSNSAAQAQAQLQAQAQAHAQAQAQAQAQAHAQAQAQAHAHAQNQAFRARGGGGGGGGGGGGGGGGGGGGGGGGGGGGGRDRNPDRRGGGGGGGQNSGGGNNSQRGDDFFYSQRLRSISGPTHELPPIEVAQETKFSGRNRLYVGNLTNDITDEELREMFKPYGEIGEIFSNLEKNFTFLKVDYHINAEKAKRPLDGSMRKGRHVRVRFAPNATILRVSNLTPFVSNELLYKSFEIFGPIERASITVDDRGKHLGEGTVEFAKKSSASACLRLCNEKCFFLTASLRPCLVEPMEVNDDNDGLPEKALNKKLQEFNQERSVGPRFADLNSFEHEYGSRWKQLHDLFKSKQDALKRELKMEEEKLDAQMEYARYEQETELLRQELRKRESDNERKKLEWEMREKQAEEMRKREEETMRRHQTEMQSRMVRQEEDMRRRQQENTLFMQAQQLNSLLDQQEGFGGGNGGGGGGGGGGGGVGNSNFDNFGGNSNSPFEVFRGNNNSSMAGNNAGPGANNQQQDSFAAFEFGVNNMNQGGNQRGNNGGNNVPWGRRRF.

A compositionally biased stretch (polar residues) spans 1 to 29; it reads MENSVKMDNSGNSTPLPQRQRRANNQPNK. The tract at residues 1 to 253 is disordered; that stretch reads MENSVKMDNS…GGNNSQRGDD (253 aa). Residues 61–80 are compositionally biased toward gly residues; it reads NGGGGSVVGGGGGGGGGGGQ. Composition is skewed to low complexity over residues 102–118 and 139–191; these read RGGN…NQNQ and ANNA…QNQA. Over residues 195–223 the composition is skewed to gly residues; it reads RGGGGGGGGGGGGGGGGGGGGGGGGGGGG. Residues 224–233 show a composition bias toward basic and acidic residues; the sequence is GRDRNPDRRG. Over residues 234–246 the composition is skewed to gly residues; that stretch reads GGGGGGQNSGGGN. 2 consecutive RRM domains span residues 285–357 and 359–445; these read NRLY…FAPN and TILR…DDND. The stretch at 488–586 forms a coiled coil; the sequence is DLFKSKQDAL…DMRRRQQENT (99 aa). The span at 551-565 shows a compositional bias: basic and acidic residues; sequence EMRKREEETMRRHQT. Disordered regions lie at residues 551-575 and 601-697; these read EMRK…VRQE and QEGF…RRRF. The span at 603–622 shows a compositional bias: gly residues; it reads GFGGGNGGGGGGGGGGGGVG. Composition is skewed to low complexity over residues 623-635 and 642-659; these read NSNF…NSNS and GNNN…GANN.

In terms of biological role, required for normal vision and courtship behavior in Drosophila. The sequence is that of Protein no-on-transient A (nonA) from Drosophila virilis (Fruit fly).